Here is a 130-residue protein sequence, read N- to C-terminus: Large ribosomal subunit protein bL17 (130 aa).

The protein belongs to the bacterial ribosomal protein bL17 family. As to quaternary structure, part of the 50S ribosomal subunit. Contacts protein L32.

This chain is Large ribosomal subunit protein bL17, found in Delftia acidovorans (strain DSM 14801 / SPH-1).